We begin with the raw amino-acid sequence, 868 residues long: Sporulation-specific protein 75 (868 aa).

The Extracellular portion of the chain corresponds to 1–34 (MNATKELTFNLLNKFQDKERFGSAQRHAGISLKG). N2 carries an N-linked (GlcNAc...) asparagine glycan. Residues 35–55 (FISGILFSFLYFLFQLSLFII) traverse the membrane as a helical segment. Residues 56–127 (LRSRFKTIYQ…DNYLFLRFLK (72 aa)) are Cytoplasmic-facing. The helical transmembrane segment at 128-148 (LLIFFFAVLSIINIPILIPIH) threads the bilayer. Topologically, residues 149 to 187 (YFSRDILKENEGERYEQSFRTTSKLDKWTMSNLSPNSSN) are extracellular. N-linked (GlcNAc...) asparagine glycosylation is present at N184. A helical transmembrane segment spans residues 188 to 208 (TLICHLFLSIFVVLWFHFILS). At 209 to 481 (SELRFVNRLG…AKYFSANILR (273 aa)) the chain is on the cytoplasmic side. The chain crosses the membrane as a helical span at residues 482–502 (IFVIIGWILPVAFLGLISQIP). N503 carries an N-linked (GlcNAc...) asparagine glycan. The Extracellular portion of the chain corresponds to 503–527 (NISSLIPFTKIIHFQSPFIREVAKN). Residues 528–548 (LIPIVTLIIIIEIVPYFFRWL) traverse the membrane as a helical segment. At 549–569 (SYLRGLKTGAQIEADVQNWYF) the chain is on the cytoplasmic side. A helical membrane pass occupies residues 570–590 (VFVFIHLFVVVTISSGFSIII). Residues 591–611 (ERLLNNPVSIPALLANDLPKC) lie on the Extracellular side of the membrane. The chain crosses the membrane as a helical span at residues 612 to 632 (ANFFCSFVLIRGMAYAGGNLL). The Cytoplasmic segment spans residues 633–660 (RIKELLFELFYYKWKRSTPHAQFKRLKT). A helical membrane pass occupies residues 661-683 (SLFFQLGSIYPIFSVLGCIGIIY). At 684–692 (SVVAPIILL) the chain is on the extracellular side. A helical transmembrane segment spans residues 693–713 (LCCISFSMVFFSFSYLFKYQY). Over 714-730 (NKENYSETFGKLYIQAL) the chain is Cytoplasmic. Residues 731–751 (MQLYAGIYFMEFCLLGLFTLF) traverse the membrane as a helical segment. Residues 752 to 753 (DQ) are Extracellular-facing. Residues 754 to 774 (YTLSTIMLVVFALTVITHSKI) traverse the membrane as a helical segment. At 775–868 (SKQIKSKPQR…DCHLENSHLH (94 aa)) the chain is on the cytoplasmic side.

This sequence belongs to the CSC1 (TC 1.A.17) family.

It is found in the membrane. Functionally, acts as an osmosensitive calcium-permeable cation channel. Required for spore wall assembly and ascus formation. In Saccharomyces cerevisiae (strain ATCC 204508 / S288c) (Baker's yeast), this protein is Sporulation-specific protein 75 (SPO75).